Consider the following 117-residue polypeptide: Large-conductance mechanosensitive channel (117 aa).

Helical transmembrane passes span 7 to 27 (EFAL…GAAF), 30 to 50 (IVTA…FGTV), and 64 to 84 (GMFV…FIFV).

This sequence belongs to the MscL family. Homopentamer.

It localises to the cell membrane. Channel that opens in response to stretch forces in the membrane lipid bilayer. May participate in the regulation of osmotic pressure changes within the cell. In Staphylococcus saprophyticus subsp. saprophyticus (strain ATCC 15305 / DSM 20229 / NCIMB 8711 / NCTC 7292 / S-41), this protein is Large-conductance mechanosensitive channel.